A 438-amino-acid polypeptide reads, in one-letter code: Xaa-Pro dipeptidase 2 (438 aa).

Mn(2+)-binding residues include Asp242, Asp253, His333, Glu378, and Glu414.

The protein belongs to the peptidase M24B family. Bacterial-type prolidase subfamily. Requires Mn(2+) as cofactor.

It catalyses the reaction Xaa-L-Pro dipeptide + H2O = an L-alpha-amino acid + L-proline. Its function is as follows. Splits dipeptides with a prolyl residue in the C-terminal position. The protein is Xaa-Pro dipeptidase 2 of Idiomarina loihiensis (strain ATCC BAA-735 / DSM 15497 / L2-TR).